The following is a 301-amino-acid chain: 4-hydroxy-tetrahydrodipicolinate synthase (301 aa).

Residue threonine 50 participates in pyruvate binding. Tyrosine 138 serves as the catalytic Proton donor/acceptor. The active-site Schiff-base intermediate with substrate is the lysine 167. Isoleucine 209 provides a ligand contact to pyruvate.

This sequence belongs to the DapA family. In terms of assembly, homotetramer; dimer of dimers.

The protein localises to the cytoplasm. The catalysed reaction is L-aspartate 4-semialdehyde + pyruvate = (2S,4S)-4-hydroxy-2,3,4,5-tetrahydrodipicolinate + H2O + H(+). It participates in amino-acid biosynthesis; L-lysine biosynthesis via DAP pathway; (S)-tetrahydrodipicolinate from L-aspartate: step 3/4. Functionally, catalyzes the condensation of (S)-aspartate-beta-semialdehyde [(S)-ASA] and pyruvate to 4-hydroxy-tetrahydrodipicolinate (HTPA). This Sorangium cellulosum (strain So ce56) (Polyangium cellulosum (strain So ce56)) protein is 4-hydroxy-tetrahydrodipicolinate synthase.